Reading from the N-terminus, the 706-residue chain is Choline transporter-like protein 2 (706 aa).

Residues 1–33 (MGGERQHYYGKHGTPQKYDPTFKGPIYHRGCTD) are Cytoplasmic-facing. Thr14 carries the post-translational modification Phosphothreonine. The chain crosses the membrane as a helical span at residues 34–54 (VICCVFLLLAIVGYVAVGIIA). At 55-232 (WTHGDPRKVI…RIFEDYTVSW (178 aa)) the chain is on the extracellular side. 2 N-linked (GlcNAc...) asparagine glycosylation sites follow: Asn187 and Asn200. The chain crosses the membrane as a helical span at residues 233-253 (YWIIIGLVIAMVLSLLFIILL). At 254 to 256 (RFL) the chain is on the cytoplasmic side. A helical membrane pass occupies residues 257-277 (AGIMVWVMIVMVILVLGYGIF). Residues 278–315 (HCYMEYSRLRGEAGSDISLVDLGFQTDLRVYLHLRQTW) are Extracellular-facing. A helical transmembrane segment spans residues 316 to 336 (MAFMIILSILEVIIILLLIFL). At 337-364 (RKRILIAIALIKEASRAVGYVMCSMLYP) the chain is on the cytoplasmic side. Residues 365–385 (LVTFLLLCLCIAYWASTAIFL) traverse the membrane as a helical segment. Residues 386–440 (STSNEAVYKIFSDTDCQAVGKTCNPENFSSSSEFHLCPGAHCQFAFYGGESTYHR) are Extracellular-facing. Residues 441-461 (ALLGLQIFNAFMFFWLANFVL) traverse the membrane as a helical segment. Residues 462–504 (ALGQVTLAGAFASYYWALKKPDDLPAFPLFSAFGRALRYHTGS) lie on the Cytoplasmic side of the membrane. Residues 505 to 525 (LAFGSLLLAIVQIIRVMLEYL) traverse the membrane as a helical segment. Residues 526 to 563 (DQRLKAAENKFAKFLMTCLKCCFWCLEKFIKFLNRNAY) are Extracellular-facing. The chain crosses the membrane as a helical span at residues 564–584 (IMIAIYGTNFCTSARNAFFLL). Residues 585-599 (MRNIIRVAVLDKVTD) lie on the Cytoplasmic side of the membrane. Residues 600-620 (FLFLLGKLLIVGSVGILAFFF) traverse the membrane as a helical segment. The Extracellular portion of the chain corresponds to 621–638 (FTHRIRIVQDTAPPLNYY). Residues 639–659 (WVPILTVIVGSYLIAHGFFSV) traverse the membrane as a helical segment. Over 660 to 706 (YGMCVDTLFLCFLEDLERNDGSMERPYFMSPTLKRLLNKTNRKPAES) the chain is Cytoplasmic.

Belongs to the CTL (choline transporter-like) family. As to quaternary structure, interacts with COCH. In terms of processing, N-glycosylated.

Its subcellular location is the cell membrane. It localises to the mitochondrion outer membrane. The enzyme catalyses choline(out) + n H(+)(in) = choline(in) + n H(+)(out). It catalyses the reaction ethanolamine(out) + n H(+)(in) = ethanolamine(in) + n H(+)(out). In terms of biological role, choline/H+ antiporter, mainly in mitochodria. Also acts as a low-affinity ethanolamine/H+ antiporter, regulating the supply of extracellular ethanolamine (Etn) for the CDP-Etn pathway, redistribute intracellular Etn and balance the CDP-Cho and CDP-Etn arms of the Kennedy pathway. The sequence is that of Choline transporter-like protein 2 (SLC44A2) from Sus scrofa (Pig).